The chain runs to 228 residues: uncharacterized protein (228 aa).

2 disordered regions span residues 1–62 (MQRP…VGRF) and 160–228 (SPRP…LSGV). The segment covering 13–33 (AASTRAPPRPSAPQQGRRQPS) has biased composition (low complexity). The span at 167-176 (RGQQVTQDGP) shows a compositional bias: polar residues.

This is an uncharacterized protein from Homo sapiens (Human).